A 541-amino-acid chain; its full sequence is Atlastin-3 (541 aa).

The segment at 1–25 is N-terminal hypervariable region (HVR); it reads MLSPQRVAAAASRGADDAMESSKPG. The Cytoplasmic portion of the chain corresponds to 1-445; it reads MLSPQRVAAA…NVFSTFRTPA (445 aa). The GB1/RHD3-type G domain maps to 57–305; it reads DLDVVVVSVA…LIPYVLNPSK (249 aa). R70, K71, G72, K73, S74, F75, and R109 together coordinate GDP. D142 is a Mg(2+) binding site. Residues R213, D214, V272, and S275 each contribute to the GDP site. A 3HB (three-helix bundle) domain region spans residues 343–434; it reads MLQATAEANN…YENFCKHNGS (92 aa). At K391 the chain carries N6-acetyllysine. A helical transmembrane segment spans residues 446-466; the sequence is VLFTGIVALYIASGLTGFIGL. A topological domain (lumenal) is located at residue E467. Residues 468–488 traverse the membrane as a helical segment; the sequence is VVAQLFNCMVGLLLIALLTWG. Residues 489–541 are Cytoplasmic-facing; it reads YIRYSGQYRELGGAIDFGAAYVLEQASSHIGNSTQATVRDAVVGRPSMDKKAQ. S535 carries the post-translational modification Phosphoserine.

This sequence belongs to the TRAFAC class dynamin-like GTPase superfamily. GB1/RHD3 GTPase family. GB1 subfamily. As to quaternary structure, monomeric and homodimeric. The homodimer, transiently formed by two molecules on opposing membranes, is the active form mediating ER membrane fusion. Interacts with ZFYVE27; both proteins are involved in endoplasmic reticulum tubular network organization. Interacts with REEP5; both proteins are involved in endoplasmic reticulum tubular network organization. Expressed in the central nervous system and in dorsal root ganglia neurons. Expressed in peripheral tissues (at protein level).

The protein localises to the endoplasmic reticulum membrane. The catalysed reaction is GTP + H2O = GDP + phosphate + H(+). In terms of biological role, atlastin-3 (ATL3) is a membrane-anchored GTPase that mediates the GTP-dependent fusion of endoplasmic reticulum (ER) membranes, maintaining the continuous ER network. It facilitates the formation of three-way junctions where ER tubules intersect. Two atlastin-3 on neighboring ER tubules bind GTP and form loose homodimers through the GB1/RHD3-type G domains and 3HB regions. Upon GTP hydrolysis, the 3HB regions tighten, pulling the membranes together to drive their fusion. After fusion, the homodimer disassembles upon release of inorganic phosphate (Pi). Subsequently, GDP dissociates, resetting the monomers to a conformation ready for a new fusion cycle. This Homo sapiens (Human) protein is Atlastin-3.